The primary structure comprises 146 residues: MSAQTDQPITEQQKKEQEQYTNLINSLPTRWEIELEFVQSLSNIPYVNYLAQNNYFNDENFINYLNYLQYWTQPEYSKFLVYPNCLHILKLLQDENFRKNIINQDFMNSLMNDMVKRWQSNANDQDENKEKEENKEVPEVRINGTN.

The disordered stretch occupies residues 121–146; sequence NANDQDENKEKEENKEVPEVRINGTN. Residues 126–139 are compositionally biased toward basic and acidic residues; sequence DENKEKEENKEVPE.

This sequence belongs to the Mediator complex subunit 31 family. In terms of assembly, component of the Mediator complex.

It localises to the nucleus. In terms of biological role, component of the Mediator complex, a coactivator involved in the regulated transcription of nearly all RNA polymerase II-dependent genes. Mediator functions as a bridge to convey information from gene-specific regulatory proteins to the basal RNA polymerase II transcription machinery. Mediator is recruited to promoters by direct interactions with regulatory proteins and serves as a scaffold for the assembly of a functional preinitiation complex with RNA polymerase II and the general transcription factors. The protein is Mediator of RNA polymerase II transcription subunit 31 (SOH1) of Candida albicans (strain SC5314 / ATCC MYA-2876) (Yeast).